A 493-amino-acid polypeptide reads, in one-letter code: F(420)H(2) dehydrogenase subunit N (493 aa).

The next 14 helical transmembrane spans lie at L7–L27, I34–F54, L78–I98, T107–A127, L130–F150, F165–A185, P205–V225, A244–I264, W273–V293, A310–M330, L333–I353, A381–M401, F404–L424, and I454–L474.

Belongs to the complex I subunit 2 family. The FPO complex is composed of at least 13 different subunits. FpoA, FpoH, FpoJ, FpoK, FpoL, FpoM and FpoN proteins constitute the membrane sector of the complex.

The protein localises to the cell membrane. It catalyses the reaction methanophenazine + reduced coenzyme F420-(gamma-L-Glu)(n) = dihydromethanophenazine + oxidized coenzyme F420-(gamma-L-Glu)(n) + H(+). Its function is as follows. Component of the F(420)H(2) dehydrogenase (FPO complex) which is part of the energy-conserving F(420)H(2):heterodisulfide oxidoreductase system. The membrane-bound electron transfer system of the complex plays an important role in the metabolism of methylotrophic methanogens when the organisms grow on methanol or methylamines. Catalyzes the oxidation of methanophenazine to dihydromethanophenazine. It shuttles electrons from F(420)H(2), via FAD and iron-sulfur (Fe-S) centers, to methanophenazine (an electron carrier in the membrane). It couples the redox reaction to proton translocation (for every two electrons transferred, two hydrogen ions are translocated across the cytoplasmic membrane), and thus conserves the redox energy in a proton gradient. It also catalyzes the oxidation of F(420)H(2) with quinones such as 2,3-dimethyl-1,4-naphthoquinone, 2-methyl-1,4-naphthoquinone and tetramethyl-p-benzoquinone. The protein is F(420)H(2) dehydrogenase subunit N (fpoN) of Methanosarcina mazei (strain ATCC BAA-159 / DSM 3647 / Goe1 / Go1 / JCM 11833 / OCM 88) (Methanosarcina frisia).